The sequence spans 46 residues: Elongation factor Tu (46 aa).

A compositionally biased stretch (basic and acidic residues) spans 1–10 (MAKGKFERSK). The tract at residues 1 to 20 (MAKGKFERSKPHVNVGTIGH) is disordered. 19-26 (GHVDHGKT) provides a ligand contact to GTP.

This sequence belongs to the GTP-binding elongation factor family. EF-Tu/EF-1A subfamily. In terms of assembly, monomer.

The protein resides in the cytoplasm. Its function is as follows. This protein promotes the GTP-dependent binding of aminoacyl-tRNA to the A-site of ribosomes during protein biosynthesis. This is Elongation factor Tu (tufA) from Eikenella corrodens.